The sequence spans 257 residues: Cytochrome c oxidase subunit 3 (257 aa).

The next 6 membrane-spanning stretches (helical) occupy residues 15–35, 82–102, 124–144, 156–176, 194–214, and 235–255; these read PWPL…VKWF, GMIL…WGFF, FLSA…VTWA, CLQG…LQGL, FFLA…FLMI, and AWYW…IYWW.

It belongs to the cytochrome c oxidase subunit 3 family. As to quaternary structure, component of the cytochrome c oxidase (complex IV, CIV), a multisubunit enzyme composed of a catalytic core of 3 subunits and several supernumerary subunits. The complex exists as a monomer or a dimer and forms supercomplexes (SCs) in the inner mitochondrial membrane with ubiquinol-cytochrome c oxidoreductase (cytochrome b-c1 complex, complex III, CIII).

The protein resides in the mitochondrion inner membrane. The enzyme catalyses 4 Fe(II)-[cytochrome c] + O2 + 8 H(+)(in) = 4 Fe(III)-[cytochrome c] + 2 H2O + 4 H(+)(out). Component of the cytochrome c oxidase, the last enzyme in the mitochondrial electron transport chain which drives oxidative phosphorylation. The respiratory chain contains 3 multisubunit complexes succinate dehydrogenase (complex II, CII), ubiquinol-cytochrome c oxidoreductase (cytochrome b-c1 complex, complex III, CIII) and cytochrome c oxidase (complex IV, CIV), that cooperate to transfer electrons derived from NADH and succinate to molecular oxygen, creating an electrochemical gradient over the inner membrane that drives transmembrane transport and the ATP synthase. Cytochrome c oxidase is the component of the respiratory chain that catalyzes the reduction of oxygen to water. Electrons originating from reduced cytochrome c in the intermembrane space (IMS) are transferred via the dinuclear copper A center (CU(A)) of subunit 2 and heme A of subunit 1 to the active site in subunit 1, a binuclear center (BNC) formed by heme A3 and copper B (CU(B)). The BNC reduces molecular oxygen to 2 water molecules using 4 electrons from cytochrome c in the IMS and 4 protons from the mitochondrial matrix. The chain is Cytochrome c oxidase subunit 3 (COIII) from Artemia franciscana (Brine shrimp).